Here is a 329-residue protein sequence, read N- to C-terminus: Ribosomal RNA small subunit methyltransferase C (329 aa).

It belongs to the methyltransferase superfamily. RsmC family. As to quaternary structure, monomer.

It localises to the cytoplasm. It catalyses the reaction guanosine(1207) in 16S rRNA + S-adenosyl-L-methionine = N(2)-methylguanosine(1207) in 16S rRNA + S-adenosyl-L-homocysteine + H(+). Functionally, specifically methylates the guanine in position 1207 of 16S rRNA in the 30S particle. This is Ribosomal RNA small subunit methyltransferase C from Haemophilus ducreyi (strain 35000HP / ATCC 700724).